We begin with the raw amino-acid sequence, 548 residues long: Lysine--tRNA ligase (548 aa).

Positions 52-60 (PSGLPHIGT) match the 'HIGH' region motif. The 'KMSKS' region signature appears at 300–304 (KISKS). Lysine 303 contacts ATP.

This sequence belongs to the class-I aminoacyl-tRNA synthetase family.

The protein resides in the cytoplasm. The catalysed reaction is tRNA(Lys) + L-lysine + ATP = L-lysyl-tRNA(Lys) + AMP + diphosphate. The protein is Lysine--tRNA ligase of Mesorhizobium japonicum (strain LMG 29417 / CECT 9101 / MAFF 303099) (Mesorhizobium loti (strain MAFF 303099)).